The following is a 257-amino-acid chain: Homeobox protein goosecoid (257 aa).

A DNA-binding region (homeobox) is located at residues 160–219 (KRRHRTIFTDEQLEALENLFQETKYPDVGTREQLARKVHLREEKVEVWFKNRRAKWRRQK). The disordered stretch occupies residues 213-257 (AKWRRQKRSSSEESENAEKWNKTSSSKASPEKREEEGKSDLDSDS). Over residues 241–257 (SPEKREEEGKSDLDSDS) the composition is skewed to basic and acidic residues.

This sequence belongs to the paired homeobox family. Bicoid subfamily.

It localises to the nucleus. Regulates chordin (CHRD). May play a role in spatial programing within discrete embryonic fields or lineage compartments during organogenesis. In concert with NKX3-2, plays a role in defining the structural components of the middle ear; required for the development of the entire tympanic ring. Probably involved in the regulatory networks that define neural crest cell fate specification and determine mesoderm cell lineages in mammals. This chain is Homeobox protein goosecoid (GSC), found in Pongo pygmaeus (Bornean orangutan).